Here is a 593-residue protein sequence, read N- to C-terminus: UvrABC system protein C (593 aa).

The region spanning 17–94 (MEPGCYLMKD…IKQYQPRYNI (78 aa)) is the GIY-YIG domain. The region spanning 199-234 (KTILKSLEERMLTASESLDFERAKEYRDLIQHIQNL) is the UVR domain.

Belongs to the UvrC family. Interacts with UvrB in an incision complex.

The protein resides in the cytoplasm. In terms of biological role, the UvrABC repair system catalyzes the recognition and processing of DNA lesions. UvrC both incises the 5' and 3' sides of the lesion. The N-terminal half is responsible for the 3' incision and the C-terminal half is responsible for the 5' incision. The sequence is that of UvrABC system protein C from Staphylococcus aureus (strain USA300).